The sequence spans 93 residues: Small ribosomal subunit protein uS15c (93 aa).

It belongs to the universal ribosomal protein uS15 family. As to quaternary structure, part of the 30S ribosomal subunit.

The protein localises to the plastid. It localises to the chloroplast. The sequence is that of Small ribosomal subunit protein uS15c (rps15) from Jasminum nudiflorum (Winter jasmine).